We begin with the raw amino-acid sequence, 333 residues long: Glyceraldehyde-3-phosphate dehydrogenase (333 aa).

Residues Arg11–Ile12, Asp33, Arg78, and Ser120 each bind NAD(+). D-glyceraldehyde 3-phosphate-binding positions include Ser149–Thr151, Thr180, Thr209–Gly210, and Arg232. Cys150 serves as the catalytic Nucleophile. The residue at position 150 (Cys150) is an S-nitrosocysteine. Asn314 contacts NAD(+).

It belongs to the glyceraldehyde-3-phosphate dehydrogenase family. Homotetramer. S-nitrosylation of Cys-150 leads to translocation to the nucleus.

The protein resides in the cytoplasm. It is found in the cytosol. Its subcellular location is the cytoskeleton. It localises to the nucleus. The enzyme catalyses D-glyceraldehyde 3-phosphate + phosphate + NAD(+) = (2R)-3-phospho-glyceroyl phosphate + NADH + H(+). The catalysed reaction is S-nitroso-L-cysteinyl-[GAPDH] + L-cysteinyl-[protein] = L-cysteinyl-[GAPDH] + S-nitroso-L-cysteinyl-[protein]. It participates in carbohydrate degradation; glycolysis; pyruvate from D-glyceraldehyde 3-phosphate: step 1/5. In terms of biological role, has both glyceraldehyde-3-phosphate dehydrogenase and nitrosylase activities, thereby playing a role in glycolysis and nuclear functions, respectively. Glyceraldehyde-3-phosphate dehydrogenase is a key enzyme in glycolysis that catalyzes the first step of the pathway by converting D-glyceraldehyde 3-phosphate (G3P) into 3-phospho-D-glyceroyl phosphate. Participates in nuclear events including transcription, RNA transport, DNA replication and apoptosis. Nuclear functions are probably due to the nitrosylase activity that mediates cysteine S-nitrosylation of nuclear target proteins such as SIRT1, HDAC2 and PRKDC. The sequence is that of Glyceraldehyde-3-phosphate dehydrogenase from Danio rerio (Zebrafish).